The following is a 417-amino-acid chain: L-rhamnose isomerase (417 aa).

3 residues coordinate Mn(2+): His-260, Asp-292, and Asp-294.

Belongs to the rhamnose isomerase family. Mn(2+) serves as cofactor.

Its subcellular location is the cytoplasm. The enzyme catalyses L-rhamnopyranose = L-rhamnulose. It participates in carbohydrate degradation; L-rhamnose degradation; glycerone phosphate from L-rhamnose: step 1/3. Its function is as follows. Catalyzes the interconversion of L-rhamnose and L-rhamnulose. This chain is L-rhamnose isomerase, found in Mannheimia succiniciproducens (strain KCTC 0769BP / MBEL55E).